The following is a 157-amino-acid chain: Probable calcium-binding protein CML23 (157 aa).

EF-hand domains are found at residues 11 to 46 (GSME…LSPN), 47 to 82 (ASQE…SDQS), 86 to 121 (SAIR…LGEK), and 122 to 157 (CSIQ…NGSA). Positions 24, 26, 28, 30, 35, 60, 62, 64, 71, 99, 101, 103, 105, 110, 135, 137, 139, 141, and 146 each coordinate Ca(2+).

Potential calcium sensor. The chain is Probable calcium-binding protein CML23 (CML23) from Arabidopsis thaliana (Mouse-ear cress).